The sequence spans 823 residues: Putative ankyrin repeat domain-containing protein 20A2 (823 aa).

5 ANK repeats span residues 66-95, 99-128, 132-161, 165-194, and 198-227; these read QHRTALHLACASGHVQVVTLLVNRKCQIDV, ENRTPLIQAVHCQEEACAVILLEHGANPNL, YGNTALHYAVYSESTSLAEKLLSHGAHIEA, DNNTPLLFAIICKKEKMVEFLLKRKASSHA, and LRRSALMLAVYYDSPGIVNILLKQNIDVFA. Disordered regions lie at residues 301–343 and 355–402; these read VPEK…EVED and VQTL…LSEN. The segment covering 372 to 384 has biased composition (basic and acidic residues); sequence QERHERSEKKQPQ. Coiled-coil stretches lie at residues 431–480, 565–724, and 776–805; these read KKLK…KQLE, EMIT…NNST, and LVLEEKSKKLMNECDHLKESLFQYEREKTE.

This is Putative ankyrin repeat domain-containing protein 20A2 from Homo sapiens (Human).